Reading from the N-terminus, the 493-residue chain is uncharacterized protein (493 aa).

Residues 316 to 403 (LNMVNFGPDD…NSVDNSVHDS (88 aa)) form a disordered region. The span at 338–353 (ESQNNSESNSESITES) shows a compositional bias: low complexity. The span at 371–398 (SQDNDTVQIDKSTSSDSVHNYFDNSVDN) shows a compositional bias: polar residues.

This sequence belongs to the mimivirus R69 family.

This is an uncharacterized protein from Acanthamoeba polyphaga (Amoeba).